The sequence spans 72 residues: Translation initiation factor IF-1 (72 aa).

One can recognise an S1-like domain in the interval 1–72 (MSKEDVIEMQ…TRGRITWRAK (72 aa)).

Belongs to the IF-1 family. In terms of assembly, component of the 30S ribosomal translation pre-initiation complex which assembles on the 30S ribosome in the order IF-2 and IF-3, IF-1 and N-formylmethionyl-tRNA(fMet); mRNA recruitment can occur at any time during PIC assembly.

It localises to the cytoplasm. Its function is as follows. One of the essential components for the initiation of protein synthesis. Stabilizes the binding of IF-2 and IF-3 on the 30S subunit to which N-formylmethionyl-tRNA(fMet) subsequently binds. Helps modulate mRNA selection, yielding the 30S pre-initiation complex (PIC). Upon addition of the 50S ribosomal subunit IF-1, IF-2 and IF-3 are released leaving the mature 70S translation initiation complex. This chain is Translation initiation factor IF-1, found in Clostridium acetobutylicum (strain ATCC 824 / DSM 792 / JCM 1419 / IAM 19013 / LMG 5710 / NBRC 13948 / NRRL B-527 / VKM B-1787 / 2291 / W).